Here is a 307-residue protein sequence, read N- to C-terminus: uncharacterized protein (307 aa).

A helical membrane pass occupies residues 12 to 34; that stretch reads LLAFLLALIMIGSVFAYMLSGGS.

Its subcellular location is the membrane. This is an uncharacterized protein from Archaeoglobus fulgidus (strain ATCC 49558 / DSM 4304 / JCM 9628 / NBRC 100126 / VC-16).